We begin with the raw amino-acid sequence, 272 residues long: Endogenous Bornavirus-like nucleoprotein 2 (272 aa).

The disordered stretch occupies residues 48–70 (MSHLRKDSQPSSPGDDAMDRSGL).

Its function is as follows. May act as an RNA-binding protein. The C-terminal region is highly homologous to the bornavirus nucleocapsid N protein that binds viral RNA and oligomerizes. The viral protein also possesses a nuclear import and a nuclear export signal. These 2 signals seem absent in EBLN-2 supporting an unrelated function in Human. The sequence is that of Endogenous Bornavirus-like nucleoprotein 2 (EBLN2) from Homo sapiens (Human).